The chain runs to 961 residues: Endochitinase A (961 aa).

The N-terminal stretch at 1-21 (MAPKLFTFVSALSGLASLASA) is a signal peptide. Positions 28-339 (SNIAVYYGQG…EKIREILYDL (312 aa)) constitute a GH18 domain. E175 (proton donor) is an active-site residue. 4 disordered regions span residues 338–720 (DLDP…TTTE), 767–787 (TDVPGSGSGSSPAQPTITADI), 813–842 (PPATTTEESTSAQPTGEVPSSDGSGSGEVS), and 912–933 (HVPVPSGSGSSPSGTQGGASPT). Over residues 342-355 (NHPPPTTSPTPTPT) the composition is skewed to pro residues. 4 stretches are compositionally biased toward low complexity: residues 356–510 (PSTT…STSS), 519–544 (SSTSVPATSSSVPSSAISPSSTPVIS), 552–604 (TSSS…PETT), and 612–635 (TPGSSVSTGTTSASTLSSSVPATS). The segment covering 636–665 (GGHTETSTVSTSSANQTPSASTSKPLIPTN) has biased composition (polar residues). The segment covering 666–720 (SASSTSTGSVTSTPSAPGVPSSSAGSDETATTSTTDSEPTSTSSGSVTAKPTTTE) has biased composition (low complexity). The GPI-anchor amidated glycine moiety is linked to residue G936. A propeptide spans 937–961 (AGSRYDVVKGVPALVALALSLLAVL) (removed in mature form).

Belongs to the glycosyl hydrolase 18 family. Chitinase class III subfamily. O-glycosylated but not N-glycosylated.

It localises to the cell membrane. Its subcellular location is the secreted. It is found in the cell wall. The protein resides in the cell tip. It catalyses the reaction Random endo-hydrolysis of N-acetyl-beta-D-glucosaminide (1-&gt;4)-beta-linkages in chitin and chitodextrins.. GPI-anchored chitinase involved in the degradation of chitin, a component of the cell walls of fungi and exoskeletal elements of some animals (including worms and arthropods). Required to reshape the cell wall at the sites where cell wall remodeling and/or cell wall maturation actively take place such as sites of conidia formation. The protein is Endochitinase A (chiA) of Emericella nidulans (Aspergillus nidulans).